The sequence spans 55 residues: Large ribosomal subunit protein bL33 (55 aa).

This sequence belongs to the bacterial ribosomal protein bL33 family.

This chain is Large ribosomal subunit protein bL33, found in Paraburkholderia phytofirmans (strain DSM 17436 / LMG 22146 / PsJN) (Burkholderia phytofirmans).